A 710-amino-acid polypeptide reads, in one-letter code: MSAQGDCEFLVKRARELVPGDLWAAKAWLITARSLYPADFNIQYEMYTIERNAERTASAGRLLYDMFVNFPDQPAVWREISVITAALRNDSQDKQTQFLRGLFETLPGRVQCEMLLKATEQCFNTLERAEMLLLLLRRFPETVVQHGVGLGETLLEAENIEDQESPVNCFRKLFVCDVLPLIINNPDVRLPASLLYKYLNKAAEFYINYVTRSTQTESQYQGSQDSSDLMSPSKRSSQKYIIDGLTEKSSQITDPWERLFKILSVVGMRCEWQMDKGRRSFGDILHRMKDLCRYISNFDSDAHAKYKNQVVYSTMLVFFKNAFQYVSNIQPSLFQGPNAPNQAPLILLEDVTNVYGDTDIDRNKHIHKKRKLAEGREKTMSSDDEDPSGKARSRHIAVNKADLANSIEVLESFKLARESWELLCSLESLDKEFTRICLSWKTETWLWLRIFLTDMIIYQGQYKKAISSLHHLAALQGSHSPQQITGQGSLENQRALIQLATCHFALGEYRQTCEKVLDLMCYILLPIQEGGKVQEEQPKVKSKFRKGSDLKLWPCTSRAIMPYCLHLLLACFKLRAFTDNRDDTALGHVIVLLQHEWPRGENLFLKAINKICQQGNFQYENFFNYVTNIDMLEEFAYLRTQEGGKIHLELLPNQGMLIKHHTVTRGITKGVKEDFRLAMERQVSRCGENLMVVLHRFCINEKILLLQTLS.

The disordered stretch occupies residues 366 to 393 (IHKKRKLAEGREKTMSSDDEDPSGKARS). A compositionally biased stretch (basic and acidic residues) spans 372–381 (LAEGREKTMS).

It belongs to the Integrator subunit 10 family. Component of the Integrator complex, composed of core subunits INTS1, INTS2, INTS3, INTS4, INTS5, INTS6, INTS7, INTS8, INTS9/RC74, INTS10, INTS11/CPSF3L, INTS12, INTS13, INTS14 and INTS15. The core complex associates with protein phosphatase 2A subunits PPP2CA and PPP2R1A, to form the Integrator-PP2A (INTAC) complex. INTS10 is part of the tail subcomplex, composed of INTS10, INTS13, INTS14 and INTS15.

It localises to the nucleus. Its function is as follows. Component of the integrator complex, a multiprotein complex that terminates RNA polymerase II (Pol II) transcription in the promoter-proximal region of genes. The integrator complex provides a quality checkpoint during transcription elongation by driving premature transcription termination of transcripts that are unfavorably configured for transcriptional elongation: the complex terminates transcription by (1) catalyzing dephosphorylation of the C-terminal domain (CTD) of Pol II subunit POLR2A/RPB1 and SUPT5H/SPT5, (2) degrading the exiting nascent RNA transcript via endonuclease activity and (3) promoting the release of Pol II from bound DNA. The integrator complex is also involved in terminating the synthesis of non-coding Pol II transcripts, such as enhancer RNAs (eRNAs), small nuclear RNAs (snRNAs), telomerase RNAs and long non-coding RNAs (lncRNAs). This Gallus gallus (Chicken) protein is Integrator complex subunit 10 (INTS10).